The chain runs to 37 residues: Large ribosomal subunit protein bL36B (37 aa).

It belongs to the bacterial ribosomal protein bL36 family.

This chain is Large ribosomal subunit protein bL36B, found in Aeromonas salmonicida (strain A449).